We begin with the raw amino-acid sequence, 99 residues long: Transmembrane protein 14A (99 aa).

3 consecutive transmembrane segments (helical) span residues 1-21 (MDLI…LGYK), 24-44 (GGVP…YGAY), and 79-99 (PAGL…LLLL).

Belongs to the TMEM14 family.

It localises to the mitochondrion membrane. Its subcellular location is the endoplasmic reticulum membrane. In terms of biological role, inhibits apoptosis via negative regulation of the mitochondrial outer membrane permeabilization involved in apoptotic signaling pathway. The polypeptide is Transmembrane protein 14A (TMEM14A) (Sus scrofa (Pig)).